Reading from the N-terminus, the 474-residue chain is Protein FAM161A (474 aa).

3 disordered regions span residues 78–126, 185–210, and 308–364; these read SSSS…PGEI, QKRR…DDAE, and REEL…DQGL. A coiled-coil region spans residues 188-250; sequence REKASDAQET…KKTRERSKAA (63 aa). The required for interaction with CFAP418 stretch occupies residues 274 to 454; that stretch reads KLRELCRAKK…PTASSRGREQ (181 aa). Residues 325 to 335 are compositionally biased toward polar residues; that stretch reads LQSSPWPSHST. Residues lysine 397 and lysine 413 each participate in a glycyl lysine isopeptide (Lys-Gly) (interchain with G-Cter in SUMO2) cross-link. Residues 412–474 are disordered; sequence LKETRRPNPS…KELARIGGAR (63 aa). Residues 422–431 show a composition bias toward basic residues; that stretch reads PRHKSPRRSA. The segment covering 450-468 has biased composition (basic and acidic residues); sequence RGREQAIRRSEKARMKELA.

This sequence belongs to the FAM161 family. As to quaternary structure, interacts (via central region) with CFAP418 (via N-terminus); the interaction is direct. Interacts (via C-terminus) with microtubules. Interacts with LCA5. Interacts with CEP290. Interacts with SDCCAG8. Interacts with FAM161B. Interacts with POC1B. Interacts with CEP78. Forms a microtubule-associated complex with POC5, CETN2 and POC1B. Interacts with CCDC15. In terms of tissue distribution, expressed in the retina and kidney.

The protein resides in the cytoplasm. The protein localises to the cytoskeleton. Its subcellular location is the cilium basal body. It localises to the cell projection. It is found in the cilium. The protein resides in the microtubule organizing center. The protein localises to the centrosome. Its subcellular location is the centriole. Its function is as follows. Involved in ciliogenesis. This is Protein FAM161A from Rattus norvegicus (Rat).